The sequence spans 64 residues: MSGREGGKKKPLKAPKKEQSEMDEDTAAFKAKQKEQQKALEAAKQKATKGGPLLQGGIKKSGKK.

The segment at 1-64 is disordered; that stretch reads MSGREGGKKK…QGGIKKSGKK (64 aa). A coiled-coil region spans residues 21 to 50; that stretch reads EMDEDTAAFKAKQKEQQKALEAAKQKATKG. The span at 32–44 shows a compositional bias: basic and acidic residues; the sequence is KQKEQQKALEAAK.

It belongs to the TMA7 family.

The protein is Translation machinery-associated protein 7 homolog of Anopheles gambiae (African malaria mosquito).